The primary structure comprises 695 residues: DNA topoisomerase 4 subunit B (695 aa).

Residues 1–53 (MSSSDKIPSLFGDDDALAPVPAAPFKASVEPRVEPTPRPIPPPPPSKTASAPG) form a disordered region. Over residues 36–46 (TPRPIPPPPPS) the composition is skewed to pro residues. Residues Y55, N95, D122, 164-170 (GLHGVGA), and K397 each bind ATP. A Toprim domain is found at 477-591 (AELFIVEGDS…GGHLFLALPP (115 aa)). Positions 483, 556, and 558 each coordinate Mg(2+).

Belongs to the type II topoisomerase family. ParE type 1 subfamily. As to quaternary structure, heterotetramer composed of ParC and ParE. Mg(2+) serves as cofactor. The cofactor is Mn(2+). Ca(2+) is required as a cofactor.

The enzyme catalyses ATP-dependent breakage, passage and rejoining of double-stranded DNA.. Functionally, topoisomerase IV is essential for chromosome segregation. It relaxes supercoiled DNA. Performs the decatenation events required during the replication of a circular DNA molecule. This chain is DNA topoisomerase 4 subunit B, found in Caulobacter vibrioides (strain ATCC 19089 / CIP 103742 / CB 15) (Caulobacter crescentus).